The following is a 162-amino-acid chain: Protein-export protein SecB (162 aa).

It belongs to the SecB family. In terms of assembly, homotetramer, a dimer of dimers. One homotetramer interacts with 1 SecA dimer.

The protein localises to the cytoplasm. Functionally, one of the proteins required for the normal export of preproteins out of the cell cytoplasm. It is a molecular chaperone that binds to a subset of precursor proteins, maintaining them in a translocation-competent state. It also specifically binds to its receptor SecA. This is Protein-export protein SecB from Pseudomonas syringae pv. syringae (strain B728a).